Consider the following 411-residue polypeptide: Translation initiation factor 2 subunit gamma (411 aa).

Positions 9-203 (QAEVNIGMVG…AIEDFIPTPK (195 aa)) constitute a tr-type G domain. A G1 region spans residues 18 to 25 (GHVDHGKT). Asp-21, Thr-25, Gly-46, and Thr-48 together coordinate Mg(2+). 21-26 (DHGKTT) contacts GTP. The G2 stretch occupies residues 46–50 (GITIK). Residues Cys-61, Cys-64, Cys-73, and Cys-76 each contribute to the Zn(2+) site. Residues 90–93 (DAPG) are G3. Residues 146-149 (NKIE) and 181-183 (SAL) contribute to the GTP site. Residues 146-149 (NKIE) form a G4 region. The G5 stretch occupies residues 181–183 (SAL).

Belongs to the TRAFAC class translation factor GTPase superfamily. Classic translation factor GTPase family. EIF2G subfamily. Heterotrimer composed of an alpha, a beta and a gamma chain. Mg(2+) serves as cofactor.

The catalysed reaction is GTP + H2O = GDP + phosphate + H(+). Its function is as follows. eIF-2 functions in the early steps of protein synthesis by forming a ternary complex with GTP and initiator tRNA. The protein is Translation initiation factor 2 subunit gamma of Pyrococcus abyssi (strain GE5 / Orsay).